Consider the following 66-residue polypeptide: Large ribosomal subunit protein bL31 (66 aa).

Residues C16, C18, C36, and C39 each contribute to the Zn(2+) site.

It belongs to the bacterial ribosomal protein bL31 family. Type A subfamily. As to quaternary structure, part of the 50S ribosomal subunit. Zn(2+) is required as a cofactor.

In terms of biological role, binds the 23S rRNA. The sequence is that of Large ribosomal subunit protein bL31 from Nitratiruptor sp. (strain SB155-2).